We begin with the raw amino-acid sequence, 249 residues long: MSKQNQWIVGVNAVASSVENDADNVREVLIEAGSKNPRLTEIEEQARRKGIDVRRVNTQALDGVGGQVRHQGVAARYAAARLWAENELEGLVEAAAGRALVLILDGVQDPHNLGACLRSAAAAGVTAVVIPKDKSATVNATVRKTSAGAADRIPVVAVTNLARCLRDLQKQGVWLYGLAGEAEASLYSVDLRGNVGLVLGGEADGLRRLTREHCDGLVKIPMPGEIESLNVSVATGVTLFEAVRQRLGA.

Positions 200, 220, and 229 each coordinate S-adenosyl-L-methionine.

Belongs to the class IV-like SAM-binding methyltransferase superfamily. RNA methyltransferase TrmH family. RlmB subfamily.

It is found in the cytoplasm. It catalyses the reaction guanosine(2251) in 23S rRNA + S-adenosyl-L-methionine = 2'-O-methylguanosine(2251) in 23S rRNA + S-adenosyl-L-homocysteine + H(+). Its function is as follows. Specifically methylates the ribose of guanosine 2251 in 23S rRNA. The protein is 23S rRNA (guanosine-2'-O-)-methyltransferase RlmB of Xanthomonas axonopodis pv. citri (strain 306).